A 192-amino-acid polypeptide reads, in one-letter code: dTTP/UTP pyrophosphatase (192 aa).

Residue D70 is the Proton acceptor of the active site.

The protein belongs to the Maf family. YhdE subfamily. A divalent metal cation serves as cofactor.

It localises to the cytoplasm. It carries out the reaction dTTP + H2O = dTMP + diphosphate + H(+). The catalysed reaction is UTP + H2O = UMP + diphosphate + H(+). Functionally, nucleoside triphosphate pyrophosphatase that hydrolyzes dTTP and UTP. May have a dual role in cell division arrest and in preventing the incorporation of modified nucleotides into cellular nucleic acids. This Alkaliphilus metalliredigens (strain QYMF) protein is dTTP/UTP pyrophosphatase.